We begin with the raw amino-acid sequence, 450 residues long: Protein tweety homolog 1 (450 aa).

The Extracellular segment spans residues 1–43 (MGAPPGYRPSAWVHLLHQLPRADFQLRPVPSVFAPQEQEYQQA). Residues 44–64 (LLLVAALAGLGLGLSLIFIAV) traverse the membrane as a helical segment. At 65–88 (YLIRFCCCRPPEPPGSKIPSPGGG) the chain is on the cytoplasmic side. Residues 89–109 (CVTWSCIVALLAGCTGIGIGF) form a helical membrane-spanning segment. Residues 110 to 214 (YGNSETSDGV…NVSFVEEYRW (105 aa)) are Extracellular-facing. Residues asparagine 130 and asparagine 205 are each glycosylated (N-linked (GlcNAc...) asparagine). The chain crosses the membrane as a helical span at residues 215 to 235 (LAYVLLLLLELLVCLFTLLGL). Topologically, residues 236–240 (AKQSK) are cytoplasmic. The helical transmembrane segment at 241–261 (WLVIVMTVMSLLVLVLSWGSM) threads the bilayer. Over 262 to 390 (GLEAATAVGL…LRGLCEDALE (129 aa)) the chain is Extracellular. 2 cysteine pairs are disulfide-bonded: cysteine 275–cysteine 385 and cysteine 303–cysteine 370. N-linked (GlcNAc...) asparagine glycans are attached at residues asparagine 284 and asparagine 355. The helical transmembrane segment at 391–411 (GLLFLLLFSLLSAGALATALC) threads the bilayer. Residues 412 to 450 (SLPRAWALFPPSDDYDDTDDDDPFNPQESKRFVQWQSSI) lie on the Cytoplasmic side of the membrane. The tract at residues 428–450 (DTDDDDPFNPQESKRFVQWQSSI) is disordered. At serine 440 the chain carries Phosphoserine.

Belongs to the tweety family. In terms of assembly, homotetramer; disulfide-linked. Homodimer. Post-translationally, N-glycosylated. Contains high-mannose, hybrid and complex oligosaccharides. As to expression, expressed in brain, eye, ovary and testis, and at lower levels in muscle, placenta, liver and lung.

The protein localises to the cell membrane. The enzyme catalyses chloride(in) = chloride(out). It carries out the reaction L-glutamate(out) = L-glutamate(in). Functionally, calcium-independent, swelling-dependent volume-regulated anion channel (VRAC-swell) which plays a pivotal role in the process of regulatory volume decrease (RVD) in the brain through the efflux of anions like chloride and organic osmolytes like glutamate. In terms of biological role, ca(2+)-independent, swelling-activated chloride channel, possibly involved in regulation of cell volume. The sequence is that of Protein tweety homolog 1 (TTYH1) from Homo sapiens (Human).